Here is a 500-residue protein sequence, read N- to C-terminus: Probable cytosol aminopeptidase (500 aa).

Positions 261 and 266 each coordinate Mn(2+). Residue lysine 273 is part of the active site. The Mn(2+) site is built by aspartate 284, aspartate 343, and glutamate 345. The active site involves arginine 347.

This sequence belongs to the peptidase M17 family. It depends on Mn(2+) as a cofactor.

The protein localises to the cytoplasm. It carries out the reaction Release of an N-terminal amino acid, Xaa-|-Yaa-, in which Xaa is preferably Leu, but may be other amino acids including Pro although not Arg or Lys, and Yaa may be Pro. Amino acid amides and methyl esters are also readily hydrolyzed, but rates on arylamides are exceedingly low.. It catalyses the reaction Release of an N-terminal amino acid, preferentially leucine, but not glutamic or aspartic acids.. Functionally, presumably involved in the processing and regular turnover of intracellular proteins. Catalyzes the removal of unsubstituted N-terminal amino acids from various peptides. The chain is Probable cytosol aminopeptidase from Wolbachia pipientis wMel.